A 490-amino-acid chain; its full sequence is Cytochrome P450 2C29 (490 aa).

The N-terminal stretch at 1-25 (MDLVVFLALTLSCLILLSLWRQSSG) is a signal peptide. N6-acetyllysine is present on residues lysine 249, lysine 252, and lysine 375. Cysteine 435 contacts heme.

Belongs to the cytochrome P450 family. Heme is required as a cofactor. Expressed in liver as well as in extrahepatic tissues including brain, kidney, lung, heart, and intestine.

The protein resides in the endoplasmic reticulum membrane. Its subcellular location is the microsome membrane. The enzyme catalyses an organic molecule + reduced [NADPH--hemoprotein reductase] + O2 = an alcohol + oxidized [NADPH--hemoprotein reductase] + H2O + H(+). It catalyses the reaction (5Z,8Z,11Z,14Z)-eicosatetraenoate + reduced [NADPH--hemoprotein reductase] + O2 = 14,15-epoxy-(5Z,8Z,11Z)-eicosatrienoate + oxidized [NADPH--hemoprotein reductase] + H2O + H(+). It functions in the pathway lipid metabolism; arachidonate metabolism. Functionally, a cytochrome P450 monooxygenase that selectively catalyzes the epoxidation of 14,15 double bond of (5Z,8Z,11Z,14Z)-eicosatetraenoic acid (arachidonate) forming 14,15-epoxyeicosatrienoic acid (14,15-EET) regioisomer. Mechanistically, uses molecular oxygen inserting one oxygen atom into a substrate, and reducing the second into a water molecule, with two electrons provided by NADPH via cytochrome P450 reductase (CPR; NADPH--hemoprotein reductase). In Mus musculus (Mouse), this protein is Cytochrome P450 2C29.